The sequence spans 116 residues: Large ribosomal subunit protein bL19 (116 aa).

Belongs to the bacterial ribosomal protein bL19 family.

Functionally, this protein is located at the 30S-50S ribosomal subunit interface and may play a role in the structure and function of the aminoacyl-tRNA binding site. The chain is Large ribosomal subunit protein bL19 from Haemophilus ducreyi (strain 35000HP / ATCC 700724).